Reading from the N-terminus, the 378-residue chain is Polygalacturonase (378 aa).

A signal peptide spans 1–20 (MILTRSVVLGFLGSASLALA). Cysteines 39 and 57 form a disulfide. PbH1 repeat units follow at residues 172–203 (SSGL…DIGD), 204–225 (SDSI…AINS), 226–246 (GTNI…SIGS), 255–276 (VETV…RVKA), and 284–306 (IKGV…TIRQ). Asp218 serves as the catalytic Proton donor. A disulfide bridge connects residues Cys220 and Cys236. The active site involves His240. 2 disulfides stabilise this stretch: Cys346-Cys352 and Cys370-Cys378.

The protein belongs to the glycosyl hydrolase 28 family.

The protein resides in the secreted. It catalyses the reaction (1,4-alpha-D-galacturonosyl)n+m + H2O = (1,4-alpha-D-galacturonosyl)n + (1,4-alpha-D-galacturonosyl)m.. The chain is Polygalacturonase (PEPG1) from Penicillium expansum (Blue mold rot fungus).